The sequence spans 215 residues: Thymidylate kinase (215 aa).

Residue 13–20 (GLEGAGKS) coordinates ATP.

It belongs to the thymidylate kinase family.

The catalysed reaction is dTMP + ATP = dTDP + ADP. Its function is as follows. Phosphorylation of dTMP to form dTDP in both de novo and salvage pathways of dTTP synthesis. The polypeptide is Thymidylate kinase (Shewanella frigidimarina (strain NCIMB 400)).